We begin with the raw amino-acid sequence, 149 residues long: Calmodulin (149 aa).

N-acetylalanine is present on Ala-2. 4 EF-hand domains span residues 8-43, 44-79, 81-116, and 117-149; these read EQIAEFKEAFSLFDKDGDGTITTKELGTVMRSLGQN, PTEAELQDMINEVDSDGNGTIDFPEFLSLMARKMKD, DTEEELIEAFKVFDRDGNGFISAAELRHVMTNLGEK, and LTDEEVDEMIREADVDGDGQINYEEFVKMMMAK. Ca(2+)-binding residues include Asp-21, Asp-23, Asp-25, Thr-27, Glu-32, Asp-57, Asp-59, Asn-61, Thr-63, Glu-68, Asp-94, Asp-96, Asn-98, and Glu-105. Lys-116 carries the N6,N6,N6-trimethyllysine modification. Positions 130, 132, 134, 136, and 141 each coordinate Ca(2+).

It belongs to the calmodulin family.

Calmodulin mediates the control of a large number of enzymes, ion channels and other proteins by Ca(2+). Among the enzymes to be stimulated by the calmodulin-Ca(2+) complex are a number of protein kinases and phosphatases. The chain is Calmodulin from Heterocapsa triquetra (Dinoflagellate).